The chain runs to 447 residues: N-succinylarginine dihydrolase (447 aa).

Substrate is bound by residues 19–28, Asn-110, and 137–138; these read AGLSFGNEAS and HR. Glu-174 is an active-site residue. A substrate-binding site is contributed by Arg-212. His-248 is a catalytic residue. Substrate is bound by residues Asp-250 and Asn-359. The Nucleophile role is filled by Cys-365.

This sequence belongs to the succinylarginine dihydrolase family. As to quaternary structure, homodimer.

It catalyses the reaction N(2)-succinyl-L-arginine + 2 H2O + 2 H(+) = N(2)-succinyl-L-ornithine + 2 NH4(+) + CO2. It functions in the pathway amino-acid degradation; L-arginine degradation via AST pathway; L-glutamate and succinate from L-arginine: step 2/5. Functionally, catalyzes the hydrolysis of N(2)-succinylarginine into N(2)-succinylornithine, ammonia and CO(2). The protein is N-succinylarginine dihydrolase of Escherichia coli (strain ATCC 8739 / DSM 1576 / NBRC 3972 / NCIMB 8545 / WDCM 00012 / Crooks).